A 353-amino-acid chain; its full sequence is MTEPLKPRIDFDGPLEVDQSPKFKAQQTFDENQAQNFAPATLDEAPEEEGQVEAVMDAALRPKRSLWRKMVMGGLALFGASVVGQGVQWTMNAWQTQDWVALGGCAAGALIIGAGVGSVVTEWRRLWRLRQRAHERDEARDLLHSHGAGKGRAFCEKLAQQAGIDQSHPALQRWYASIHETQNDREVVTLYAHLVQPVLDAQARREISRSAAESTLMIAVSPLALVDMAFIAWRNLRLINRIATLYGIELGYYSRLRLFRLVLLNIAFAGASELVREVGMDWMSQDLAARLSTRAAQGIGAGLLTARLGIKAMELCRPLPWLDDDKPRLGDFRRQLIGQLKETLQKAPTRREN.

The next 3 helical transmembrane spans lie at methionine 70–threonine 90, valine 100–valine 120, and glutamate 213–tryptophan 233.

This sequence belongs to the UPF0283 family.

It is found in the cell inner membrane. This Escherichia fergusonii (strain ATCC 35469 / DSM 13698 / CCUG 18766 / IAM 14443 / JCM 21226 / LMG 7866 / NBRC 102419 / NCTC 12128 / CDC 0568-73) protein is UPF0283 membrane protein YcjF.